A 385-amino-acid polypeptide reads, in one-letter code: ATP phosphoribosyltransferase regulatory subunit (385 aa).

Belongs to the class-II aminoacyl-tRNA synthetase family. HisZ subfamily. Heteromultimer composed of HisG and HisZ subunits.

It localises to the cytoplasm. Its pathway is amino-acid biosynthesis; L-histidine biosynthesis; L-histidine from 5-phospho-alpha-D-ribose 1-diphosphate: step 1/9. Required for the first step of histidine biosynthesis. May allow the feedback regulation of ATP phosphoribosyltransferase activity by histidine. This Bordetella petrii (strain ATCC BAA-461 / DSM 12804 / CCUG 43448) protein is ATP phosphoribosyltransferase regulatory subunit.